We begin with the raw amino-acid sequence, 418 residues long: Exodeoxyribonuclease 7 large subunit (418 aa).

Belongs to the XseA family. As to quaternary structure, heterooligomer composed of large and small subunits.

Its subcellular location is the cytoplasm. The catalysed reaction is Exonucleolytic cleavage in either 5'- to 3'- or 3'- to 5'-direction to yield nucleoside 5'-phosphates.. In terms of biological role, bidirectionally degrades single-stranded DNA into large acid-insoluble oligonucleotides, which are then degraded further into small acid-soluble oligonucleotides. This Acaryochloris marina (strain MBIC 11017) protein is Exodeoxyribonuclease 7 large subunit.